Reading from the N-terminus, the 234-residue chain is Orotidine 5'-phosphate decarboxylase (234 aa).

Substrate contacts are provided by residues Asp11, Lys33, 60-69, Thr120, Arg181, Gln190, Gly210, and Arg211; that span reads DLKFHDIPNT. Lys62 functions as the Proton donor in the catalytic mechanism.

This sequence belongs to the OMP decarboxylase family. Type 1 subfamily. As to quaternary structure, homodimer.

The enzyme catalyses orotidine 5'-phosphate + H(+) = UMP + CO2. It participates in pyrimidine metabolism; UMP biosynthesis via de novo pathway; UMP from orotate: step 2/2. Functionally, catalyzes the decarboxylation of orotidine 5'-monophosphate (OMP) to uridine 5'-monophosphate (UMP). The sequence is that of Orotidine 5'-phosphate decarboxylase from Aliivibrio fischeri (strain ATCC 700601 / ES114) (Vibrio fischeri).